The primary structure comprises 146 residues: Probable acetyltransferase HI_0677 (146 aa).

Residues 1 to 146 (MKLFKAEQWN…ERLFELSLSC (146 aa)) enclose the N-acetyltransferase domain.

This Haemophilus influenzae (strain ATCC 51907 / DSM 11121 / KW20 / Rd) protein is Probable acetyltransferase HI_0677.